The sequence spans 615 residues: Lipoprotein LpqB (615 aa).

Residues 1 to 29 (MGADRGRGGRRRPARVVAYAVGGVVLLAG) form the signal peptide. Cysteine 30 is lipidated: N-palmitoyl cysteine. Residue cysteine 30 is the site of S-diacylglycerol cysteine attachment. Residues 100-123 (PDESATVLAGGPGTESDHSGNRED) form a disordered region. Positions 114 to 123 (ESDHSGNRED) are enriched in basic and acidic residues.

The protein belongs to the LpqB lipoprotein family.

It is found in the cell membrane. The polypeptide is Lipoprotein LpqB (Streptomyces coelicolor (strain ATCC BAA-471 / A3(2) / M145)).